The sequence spans 234 residues: MNKKLLMNFFIVSPLLLATTATDFTPVPLSSNQIIKTAKASTNDNIKDLLDWYSSGSDTFTNSEVLDNSLGSMRIKNTDGSISLIIFPSPYYSPAFTKGEKVDLNTKRTKKSQHTSEGTYIHFQISGVTNTEKLPTPIELPLKVKVHGKDSPLKYGPKFDKKQLAISTLDFEIRHQLTQIHGLYRSSDKTGGYWKITMNDGSTYQSDLSKKFEYNTEKPPINIDEIKTIEAEIN.

Positions 1 to 40 (MNKKLLMNFFIVSPLLLATTATDFTPVPLSSNQIIKTAKA) are cleaved as a signal peptide.

The protein belongs to the staphylococcal/streptococcal toxin family.

The protein resides in the secreted. Responsible for the symptoms of toxic shock syndrome. This is Toxic shock syndrome toxin-1 (tst) from Staphylococcus aureus.